A 490-amino-acid polypeptide reads, in one-letter code: 3-octaprenyl-4-hydroxybenzoate carboxy-lyase (490 aa).

Mn(2+) is bound at residue Asn172. Prenylated FMN-binding positions include 175 to 177 (IYR), 189 to 191 (RWL), and 194 to 195 (RG). Glu238 is a Mn(2+) binding site. Asp287 functions as the Proton donor in the catalytic mechanism.

The protein belongs to the UbiD family. As to quaternary structure, homohexamer. It depends on prenylated FMN as a cofactor. Mn(2+) serves as cofactor.

The protein resides in the cell membrane. The enzyme catalyses a 4-hydroxy-3-(all-trans-polyprenyl)benzoate + H(+) = a 2-(all-trans-polyprenyl)phenol + CO2. It participates in cofactor biosynthesis; ubiquinone biosynthesis. Functionally, catalyzes the decarboxylation of 3-octaprenyl-4-hydroxy benzoate to 2-octaprenylphenol, an intermediate step in ubiquinone biosynthesis. The protein is 3-octaprenyl-4-hydroxybenzoate carboxy-lyase of Idiomarina loihiensis (strain ATCC BAA-735 / DSM 15497 / L2-TR).